Here is a 349-residue protein sequence, read N- to C-terminus: Farnesyl pyrophosphate synthase vrtD (349 aa).

Residues lysine 53, arginine 56, and glutamine 92 each contribute to the isopentenyl diphosphate site. Mg(2+) is bound by residues aspartate 99 and aspartate 103. Arginine 108 serves as a coordination point for dimethylallyl diphosphate. An isopentenyl diphosphate-binding site is contributed by arginine 109. Dimethylallyl diphosphate contacts are provided by lysine 196, threonine 197, glutamine 236, lysine 253, and lysine 262.

Belongs to the FPP/GGPP synthase family. The cofactor is Mg(2+).

The enzyme catalyses isopentenyl diphosphate + dimethylallyl diphosphate = (2E)-geranyl diphosphate + diphosphate. The catalysed reaction is isopentenyl diphosphate + (2E)-geranyl diphosphate = (2E,6E)-farnesyl diphosphate + diphosphate. It participates in secondary metabolite biosynthesis; terpenoid biosynthesis. Its function is as follows. Farnesyl pyrophosphate synthase; part of the gene cluster that mediates the biosynthesis of viridicatumtoxin, a tetracycline-like fungal meroterpenoid with a unique, fused spirobicyclic ring system. The first step of the pathway is the production of the malonamoyl-CoA starter unit for the polyketide synthase vrtA. The aldolase vrtJ may be involved in the synthesis of the malonamate substrate for malonamoyl-CoA synthetase vrtB. The polyketide synthase vrtA then may utilize the malonamoyl-CoA starter unit, followed by sequential condensation of eight malonyl-CoA units to form the polyketide backbone. The cyclization of the last ring could be mediated by the lactamase-like protein vrtG. The proposed post-PKS tailoring steps are a hydroxylation at C5 catalyzed the cytochrome P450 monooxygenase vrtE, a hydroxylation at C12a catalyzed by VrtH and/or VrtI, and an O-methylation by the O-methyltransferase vrtF. VrtC is then proposed to catalyze the transfer of a geranyl group synthesized by vrtD to the aromatic C ring of the tetracyclic polyketide intermediate of viridicatumtoxin to yield previridicatumtoxin. Finally, the cytochrome P450 monooxygenase vrtK catalyzes the spirocyclization of the geranyl moiety of previridicatumtoxin to afford viridicatumtoxin. This is Farnesyl pyrophosphate synthase vrtD from Penicillium aethiopicum.